Here is a 689-residue protein sequence, read N- to C-terminus: Glycine--tRNA ligase beta subunit (689 aa).

The protein belongs to the class-II aminoacyl-tRNA synthetase family. Tetramer of two alpha and two beta subunits.

It localises to the cytoplasm. The enzyme catalyses tRNA(Gly) + glycine + ATP = glycyl-tRNA(Gly) + AMP + diphosphate. The chain is Glycine--tRNA ligase beta subunit from Acinetobacter baumannii (strain AB307-0294).